A 263-amino-acid polypeptide reads, in one-letter code: Hydroxyacylglutathione hydrolase (263 aa).

Positions 56, 58, 60, 61, 115, 135, and 175 each coordinate Zn(2+).

The protein belongs to the metallo-beta-lactamase superfamily. Glyoxalase II family. Monomer. Requires Zn(2+) as cofactor.

It catalyses the reaction an S-(2-hydroxyacyl)glutathione + H2O = a 2-hydroxy carboxylate + glutathione + H(+). It functions in the pathway secondary metabolite metabolism; methylglyoxal degradation; (R)-lactate from methylglyoxal: step 2/2. Functionally, thiolesterase that catalyzes the hydrolysis of S-D-lactoyl-glutathione to form glutathione and D-lactic acid. This Nitrosococcus oceani (strain ATCC 19707 / BCRC 17464 / JCM 30415 / NCIMB 11848 / C-107) protein is Hydroxyacylglutathione hydrolase.